A 623-amino-acid chain; its full sequence is Vacuolar-sorting receptor 1 (623 aa).

The signal sequence occupies residues 1–22 (MKCWRLSAILFLGFMLTSLSTA). Residues 23–564 (RFVVEKNSLS…SKTASQAKST (542 aa)) lie on the Lumenal side of the membrane. The 110-residue stretch at 54-163 (QYGGSMAGNV…SFGEKLKDAI (110 aa)) folds into the PA domain. N-linked (GlcNAc...) asparagine glycosylation occurs at Asn143. EGF-like domains are found at residues 411–461 (ETNE…TTCE) and 464–511 (GHGR…KNCE). Disulfide bonds link Cys415-Cys433, Cys422-Cys442, Cys444-Cys460, Cys468-Cys488, Cys475-Cys496, and Cys498-Cys510. The EGF-like 3; calcium-binding domain occupies 512–554 (DIDECKDKKACQCPECSCKNTWGSYNCSCSGDLLYIKDQDTCI). A glycan (N-linked (GlcNAc...) asparagine) is linked at Asn537. An intrachain disulfide couples Cys540 to Cys553. A helical membrane pass occupies residues 565–585 (WAAFWVVLIALAMIAGGGFLV). Topologically, residues 586–623 (YKYRIRQYMDSEIRAIMAQYMPLDSQEEGPNHVNHQRG) are cytoplasmic. The short motif at 605–608 (YMPL) is the Tyrosine-based internalization motif element.

Belongs to the VSR (BP-80) family. In terms of assembly, interacts with the N-terminal propeptide of aleurein (proaleurein).

It localises to the membrane. It is found in the golgi apparatus membrane. The protein localises to the cytoplasmic vesicle. Its subcellular location is the clathrin-coated vesicle membrane. The protein resides in the prevacuolar compartment membrane. Functionally, vacuolar-sorting receptor (VSR) involved in clathrin-coated vesicles sorting from Golgi apparatus to vacuoles. Seems to binds preferentially proteins containing a N-terminal NPIR motif. In Pisum sativum (Garden pea), this protein is Vacuolar-sorting receptor 1 (BP80).